We begin with the raw amino-acid sequence, 369 residues long: MNCKYFGICGACIVYDGGYETQLSQKVELNKELFAPFYMGKISVFESPRSNYRSRSEFKIWHEGDEKINYAMNRADKGGVILIDECPQVSSAIFALMPKLLRAIKRHKIDFKLFGVDFLSSNSGEIVVSLLYHRALDSTFKEIAEIISDELDIYIIGRSRGQKVVIKQDYVTEILHVDGVEFKFNYIENSFTQPNAKVNEQMIGWALRELPNMDADLLELYCGAGNFTIPFASKYRKILATEISKSSINAAKSNMSLNKVKNISFVRMGVEEFVEALDGVRIFNRMKEIDIDSYEIKTIFVDPPRSGMDEATCRFASRYENIIYISCNPQTLLRDLELLTKTHNVIDMALFDQFPYTHHAEMGAKLVKK.

Gln-193, Tyr-221, Asn-226, Glu-242, and Asp-302 together coordinate S-adenosyl-L-methionine. Cys-327 serves as the catalytic Nucleophile. Glu-361 (proton acceptor) is an active-site residue.

It belongs to the class I-like SAM-binding methyltransferase superfamily. RNA M5U methyltransferase family. TrmA subfamily.

It catalyses the reaction uridine(54) in tRNA + S-adenosyl-L-methionine = 5-methyluridine(54) in tRNA + S-adenosyl-L-homocysteine + H(+). It carries out the reaction uridine(341) in tmRNA + S-adenosyl-L-methionine = 5-methyluridine(341) in tmRNA + S-adenosyl-L-homocysteine + H(+). Dual-specificity methyltransferase that catalyzes the formation of 5-methyluridine at position 54 (m5U54) in all tRNAs, and that of position 341 (m5U341) in tmRNA (transfer-mRNA). The chain is tRNA/tmRNA (uracil-C(5))-methyltransferase from Sulfurimonas denitrificans (strain ATCC 33889 / DSM 1251) (Thiomicrospira denitrificans (strain ATCC 33889 / DSM 1251)).